An 867-amino-acid chain; its full sequence is Alanine--tRNA ligase (867 aa).

Zn(2+)-binding residues include His559, His563, Cys661, and His665.

Belongs to the class-II aminoacyl-tRNA synthetase family. It depends on Zn(2+) as a cofactor.

It localises to the cytoplasm. The enzyme catalyses tRNA(Ala) + L-alanine + ATP = L-alanyl-tRNA(Ala) + AMP + diphosphate. Catalyzes the attachment of alanine to tRNA(Ala) in a two-step reaction: alanine is first activated by ATP to form Ala-AMP and then transferred to the acceptor end of tRNA(Ala). Also edits incorrectly charged Ser-tRNA(Ala) and Gly-tRNA(Ala) via its editing domain. The polypeptide is Alanine--tRNA ligase (Aquifex aeolicus (strain VF5)).